The primary structure comprises 220 residues: MKENKFEMIYKIYKILLDYYGHQNWWPAETRYEVVVGAILTQNTSWKNVERAINNLKMEDLLEEVKILNVDEDKLKELIRPAGFYNLKAKRLKNVTKFIVENYGNTEEMAKTDKDTLILRAELLSINGVGKETADSILLYALDRESFVVDAYTKRMFSRLGVINEKAKYDEIKEIFEKNLPKDLEIYKEYHALIVEHCKKFCRKKALCDNCPIKEFCLSK.

Cysteine 202, cysteine 208, cysteine 211, and cysteine 217 together coordinate [4Fe-4S] cluster.

It belongs to the Nth/MutY family. [4Fe-4S] cluster serves as cofactor.

The chain is Putative DNA repair glycosylase MJ1434 from Methanocaldococcus jannaschii (strain ATCC 43067 / DSM 2661 / JAL-1 / JCM 10045 / NBRC 100440) (Methanococcus jannaschii).